A 339-amino-acid chain; its full sequence is Centrosomal protein of 41 kDa (339 aa).

The tract at residues 56–99 is disordered; it reads RLEDSDSATSEADTDIAAKTNGKGSPEEQSPSPVQFINSTGAGD. Residues Ser62 and Ser65 each carry the phosphoserine modification. The segment covering 62-73 has biased composition (low complexity); it reads SATSEADTDIAA. Position 75 is a phosphothreonine (Thr75). A phosphoserine mark is found at Ser80 and Ser87. The segment covering 82–99 has biased composition (polar residues); it reads EEQSPSPVQFINSTGAGD. The Rhodanese domain occupies 135 to 232; the sequence is PDCPFLLLDV…LAQKFPEGLV (98 aa). A disordered region spans residues 283–339; the sequence is DQGPANNPSRLNQNNSAGRDLKVPAGRGGQNLPTGCPTSHSNSRTLNSGHLQGKPWK. Residues 286-299 show a composition bias toward polar residues; sequence PANNPSRLNQNNSA. Arg309 bears the Omega-N-methylarginine mark. Residues 313–332 show a composition bias toward polar residues; sequence NLPTGCPTSHSNSRTLNSGH.

This sequence belongs to the CEP41 family. In terms of assembly, found in a complex with TTLL6.

Its subcellular location is the cytoplasm. It is found in the cytoskeleton. The protein resides in the microtubule organizing center. It localises to the centrosome. The protein localises to the cell projection. Its subcellular location is the cilium. It is found in the cilium basal body. Functionally, required during ciliogenesis for tubulin glutamylation in cilium. Probably acts by participating in the transport of TTLL6, a tubulin polyglutamylase, between the basal body and the cilium. The chain is Centrosomal protein of 41 kDa (Cep41) from Rattus norvegicus (Rat).